A 179-amino-acid polypeptide reads, in one-letter code: Large ribosomal subunit protein uL5 (179 aa).

The protein belongs to the universal ribosomal protein uL5 family. Part of the 50S ribosomal subunit; part of the 5S rRNA/L5/L18/L25 subcomplex. Contacts the 5S rRNA and the P site tRNA. Forms a bridge to the 30S subunit in the 70S ribosome.

Functionally, this is one of the proteins that bind and probably mediate the attachment of the 5S RNA into the large ribosomal subunit, where it forms part of the central protuberance. In the 70S ribosome it contacts protein S13 of the 30S subunit (bridge B1b), connecting the 2 subunits; this bridge is implicated in subunit movement. Contacts the P site tRNA; the 5S rRNA and some of its associated proteins might help stabilize positioning of ribosome-bound tRNAs. The polypeptide is Large ribosomal subunit protein uL5 (Citrobacter koseri (strain ATCC BAA-895 / CDC 4225-83 / SGSC4696)).